The primary structure comprises 2605 residues: Non-reducing polyketide synthase dbaI (2605 aa).

Positions 97-243 (PNTLLIPLVM…PASEISDLHR (147 aa)) are N-terminal acylcarrier protein transacylase domain (SAT). C144 (nucleophile; for transacylase activity) is an active-site residue. The Proton donor/acceptor; for transacylase activity role is filled by H262. The region spanning 382–798 (ENDIAVVGMS…GSNASIVVTQ (417 aa)) is the Ketosynthase family 3 (KS3) domain. Active-site for beta-ketoacyl synthase activity residues include C547, H682, and H721. The tract at residues 908–1195 (FGGQVSTFVG…VTNMASRALG (288 aa)) is malonyl-CoA:ACP transacylase (MAT) domain. Residues 1285–1420 (PNTLLTFVGY…GRVIFRSISD (136 aa)) are N-terminal hotdog fold. Positions 1285–1596 (PNTLLTFVGY…YVKIPKASMS (312 aa)) constitute a PKS/mFAS DH domain. The interval 1316–1594 (LIRGHIIAQT…ISYVKIPKAS (279 aa)) is product template (PT) domain. Catalysis depends on H1320, which acts as the Proton acceptor; for dehydratase activity. The interval 1447–1596 (EVDEVLQNRN…YVKIPKASMS (150 aa)) is C-terminal hotdog fold. D1504 acts as the Proton donor; for dehydratase activity in catalysis. Residues 1665–1739 (GQLTQRIKSI…SLIKCVRKAM (75 aa)) enclose the Carrier domain. O-(pantetheine 4'-phosphoryl)serine is present on S1699. Residues 1742-1780 (DADSAEYTTEQSTSEAADSDDKSTNYTTPSTPGEEALDM) form a disordered region. The segment covering 1747–1757 (EYTTEQSTSEA) has biased composition (polar residues). The interval 1963 to 2151 (DWPLNRLFYR…VGYGHVDWTD (189 aa)) is methyltransferase domain. The interval 2230-2473 (VTGATGSLGC…LSWTPVDVVA (244 aa)) is NADPH-binding (R) domain.

The enzyme catalyses 4 malonyl-CoA + acetyl-CoA + AH2 + S-adenosyl-L-methionine + 3 H(+) = 2,4-dihydroxy-3-methyl-6-(2-oxopropyl)benzaldehyde + A + S-adenosyl-L-homocysteine + 4 CO2 + 5 CoA + H2O. Its pathway is secondary metabolite biosynthesis. Its function is as follows. Non-reducing polyketide synthase; part of the gene cluster that mediates the biosynthesis of the antibiotic 2,4-dihydroxy-3-methyl-6-(2-oxopropyl)benzaldehyde (DHMBA) and its derivatives. The direct non-reducing polyketide synthase dbaI product is 2,4-dihydroxy-3-methyl-6-(2-oxopropyl)benzaldehyde (DHMBA), produced by condensation of one acetyl-CoA starter unit with 4 malonyl-CoA units and one methylation step. The FAD-dependent monooxygenase dbaH is responsible for the synthesis of yellow pigments derived from the oxidation of DHMBA. The roles of dbaB, C, E and F have still to be determined. The protein is Non-reducing polyketide synthase dbaI of Emericella nidulans (strain FGSC A4 / ATCC 38163 / CBS 112.46 / NRRL 194 / M139) (Aspergillus nidulans).